The sequence spans 95 residues: Aspartyl/glutamyl-tRNA(Asn/Gln) amidotransferase subunit C (95 aa).

This sequence belongs to the GatC family. Heterotrimer of A, B and C subunits.

It catalyses the reaction L-glutamyl-tRNA(Gln) + L-glutamine + ATP + H2O = L-glutaminyl-tRNA(Gln) + L-glutamate + ADP + phosphate + H(+). The enzyme catalyses L-aspartyl-tRNA(Asn) + L-glutamine + ATP + H2O = L-asparaginyl-tRNA(Asn) + L-glutamate + ADP + phosphate + 2 H(+). In terms of biological role, allows the formation of correctly charged Asn-tRNA(Asn) or Gln-tRNA(Gln) through the transamidation of misacylated Asp-tRNA(Asn) or Glu-tRNA(Gln) in organisms which lack either or both of asparaginyl-tRNA or glutaminyl-tRNA synthetases. The reaction takes place in the presence of glutamine and ATP through an activated phospho-Asp-tRNA(Asn) or phospho-Glu-tRNA(Gln). This chain is Aspartyl/glutamyl-tRNA(Asn/Gln) amidotransferase subunit C, found in Nitrobacter winogradskyi (strain ATCC 25391 / DSM 10237 / CIP 104748 / NCIMB 11846 / Nb-255).